Here is an 87-residue protein sequence, read N- to C-terminus: U3-theraphotoxin-Hhn1a 16 (87 aa).

Positions 1–24 (MVNMKASMFLTFAGLVLLFVVCYA) are cleaved as a signal peptide. The propeptide occupies 25 to 52 (SESEEKEFPKEMLSSIFAVDNDFKQGER). Disulfide bonds link Cys-54/Cys-67, Cys-61/Cys-72, and Cys-66/Cys-79.

The protein belongs to the neurotoxin 10 (Hwtx-1) family. 51 (Hntx-8) subfamily. Hntx-8 sub-subfamily. Expressed by the venom gland.

The protein resides in the secreted. Ion channel inhibitor. This Cyriopagopus hainanus (Chinese bird spider) protein is U3-theraphotoxin-Hhn1a 16.